The sequence spans 401 residues: Elongation factor Tu (401 aa).

The tr-type G domain occupies 10 to 211 (KPHLNIGTIG…AVDTYVPNPT (202 aa)). The segment at 19–26 (GHVDHGKT) is G1. GTP is bound at residue 19 to 26 (GHVDHGKT). Threonine 26 contacts Mg(2+). Positions 62–66 (GITIA) are G2. A G3 region spans residues 83–86 (DCPG). GTP is bound by residues 83–87 (DCPGH) and 138–141 (NKAD). Positions 138–141 (NKAD) are G4. Residues 179-181 (SAL) form a G5 region.

Belongs to the TRAFAC class translation factor GTPase superfamily. Classic translation factor GTPase family. EF-Tu/EF-1A subfamily. Monomer.

Its subcellular location is the cytoplasm. It carries out the reaction GTP + H2O = GDP + phosphate + H(+). Functionally, GTP hydrolase that promotes the GTP-dependent binding of aminoacyl-tRNA to the A-site of ribosomes during protein biosynthesis. This chain is Elongation factor Tu, found in Leptospira biflexa serovar Patoc (strain Patoc 1 / Ames).